Here is a 486-residue protein sequence, read N- to C-terminus: E3 ubiquitin-protein ligase TRIM50 (486 aa).

The RING-type zinc finger occupies 16–57; the sequence is CPVCLEVFKEPLMLQCGHSYCKGCLLSLSRHLDSELRCPVCR. The B box-type zinc finger occupies 84–125; the sequence is PEPQVCTHHRNPLSLFCEKDQELICGLCGLLGSHQHHRVTPV. 4 residues coordinate Zn(2+): Cys89, His92, Cys111, and His117. Coiled coils occupy residues 125 to 170 and 204 to 235; these read VSTV…ESDV and LVAS…FGNE. The B30.2/SPRY domain occupies 275–474; that stretch reads DIKLTVWKRL…LPMVLPLPSG (200 aa). Residue Lys372 is modified to N6-acetyllysine.

The protein belongs to the TRIM/RBCC family. As to quaternary structure, can form dimers and trimers. Interacts with several E2 ubiquitin-conjugating enzymes, including UBE2L6, UBE2E1, UBE2E3. No interaction with UBE2H. Interacts with BECN1. Interacts with SQSTM1. Interacts with NLRP3. In terms of processing, auto-ubiquitinated. Acetylated by EP300 and KAT2B. HDAC6 drives TRIM50 deacetylation. Acetylation antagonizes with TRIM50 ubiquitination.

It localises to the cytoplasm. The catalysed reaction is S-ubiquitinyl-[E2 ubiquitin-conjugating enzyme]-L-cysteine + [acceptor protein]-L-lysine = [E2 ubiquitin-conjugating enzyme]-L-cysteine + N(6)-ubiquitinyl-[acceptor protein]-L-lysine.. Functionally, E3 ubiquitin-protein ligase that ubiquitinates Beclin-1/BECN1 in a 'Lys-63'-dependent manner enhancing its binding to ULK1. In turn, promotes starvation-induced autophagy activation. Also interacts with p62/SQSTM1 protein and thereby induces the formation and the autophagy clearance of aggresome-associated polyubiquitinated proteins through HDAC6 interaction. Also promotes NLRP3 inflammasome activation by directly inducing NLRP3 oligomerization independent of its E3 ligase function. The protein is E3 ubiquitin-protein ligase TRIM50 (TRIM50) of Sus scrofa (Pig).